We begin with the raw amino-acid sequence, 279 residues long: MTVHATPEPAAHQGVALGSSFYAAMRILPRPQREAMFQVYSFCRFVDDIADSDRPREQRVAELQQWRDDIAALYRGAPPPRLADYQESLRTFGLKREDFEAIIDGMEMDVDADIRAPDEATLDLYCDRVASAVGRLSVRIFGLPEADGIELSHHLGRALQLTNILRDIDEDAGIGRLYLPSELLHKVGITATDPRVVAADSALPSVCAPLVERALAHFAAADKVMNRNPRRVVKAPRIMGKYYYSILQLLIARGFAAPRAPVKLGKASKIAILLQYAIV.

This sequence belongs to the phytoene/squalene synthase family. HpnD subfamily.

It carries out the reaction 2 (2E,6E)-farnesyl diphosphate = presqualene diphosphate + diphosphate. It participates in secondary metabolite biosynthesis; hopanoid biosynthesis. Its function is as follows. Involved in the biosynthesis of the hopanoid precursor squalene (SQ) from farnesyl diphosphate (FPP). Catalyzes the first step, the formation of presqualene diphosphate (PSPP) from two molecules of FPP. This Rhodopseudomonas palustris (strain ATCC BAA-98 / CGA009) protein is Presqualene diphosphate synthase.